A 118-amino-acid polypeptide reads, in one-letter code: BLOC-1-related complex subunit 8 (118 aa).

Over residues 98–107 the composition is skewed to polar residues; that stretch reads KEQISNSQGR. Residues 98-118 are disordered; sequence KEQISNSQGRSPHVSAPSASS.

This sequence belongs to the BORCS8 family.

The protein resides in the lysosome membrane. Its function is as follows. As part of a BORC-like complex, it may play a role in the movement and localization of lysosomes at the cell periphery. Associated with the cytosolic face of lysosomes, this complex may couple lysosomes to microtubule plus-end-directed kinesin motors, driving lysosome movement toward the cell periphery. This Tetraodon nigroviridis (Spotted green pufferfish) protein is BLOC-1-related complex subunit 8.